Consider the following 310-residue polypeptide: Beta-carotene 3-hydroxylase 1, chloroplastic (310 aa).

The transit peptide at 1–51 (MAAGLSTAVTFKPLHRSFSSSSTDFRLRLPKSLSGFSPSLRFKRFSVCYVV) directs the protein to the chloroplast. 2 consecutive transmembrane segments (helical) span residues 98-118 (YLIA…MAVY) and 132-152 (MLEM…MEFW). One can recognise a Fatty acid hydroxylase domain in the interval 145 to 272 (AAVGMEFWAR…KFNGVPYGLF (128 aa)). Residues 157–162 (HRALWH) carry the Histidine box-1 motif. Residues 169-173 (HESHH) carry the Histidine box-2 motif. Transmembrane regions (helical) follow at residues 183–203 (NDVF…YGFF) and 208–228 (VPGL…AYMF). The Histidine box-3 signature appears at 230–235 (HDGLVH). Residues 256 to 260 (HQLHH) carry the Histidine box-4 motif.

Belongs to the sterol desaturase family. Homodimer. As to expression, expressed in leaves, flowers, stems, roots and siliques.

The protein localises to the plastid. Its subcellular location is the chloroplast membrane. The enzyme catalyses all-trans-beta-carotene + 4 reduced [2Fe-2S]-[ferredoxin] + 2 O2 + 4 H(+) = all-trans-zeaxanthin + 4 oxidized [2Fe-2S]-[ferredoxin] + 2 H2O. Its function is as follows. Nonheme diiron monooxygenase involved in the biosynthesis of xanthophylls. Specific for beta-ring hydroxylations of beta-carotene. Also has a low activity toward the beta- and epsilon-rings of alpha-carotene. No activity with acyclic carotenoids such as lycopene and neurosporene. Uses ferredoxin as an electron donor. This is Beta-carotene 3-hydroxylase 1, chloroplastic (BETA-OHASE 1) from Arabidopsis thaliana (Mouse-ear cress).